The primary structure comprises 361 residues: MARVCVMMMAMAIAMAMNIAMGDPIAPCYFIFGDSLVDSGNNNRLTSLARANYFPYGIDFQYGPTGRFSNGKTTVDVITELLGFDDYITPYSEARGEDILRGVNYASAAAGIREETGRQLGARITFAGQVANHVNTVSQVVNILGDENEAANYLSKCIYSIGLGSNDYLNNYFMPVYYSTGSQYSPDAYANDLINRYTEQLRIMYNNGARKFALVGIGAIGCSPNELAQNSRDGVTCDERINSANRIFNSKLVSLVDHFNQNTPGAKFTYINAYGIFQDMVANPSRYGFRVTNAGCCGVGRNNGQITCLPGQAPCLNRDEYVFWDAFHPGEAANVVIGSRSFQRESASDAHPYDIQQLARL.

Positions 1–22 are cleaved as a signal peptide; sequence MARVCVMMMAMAIAMAMNIAMG. Catalysis depends on Ser-35, which acts as the Nucleophile. Active-site residues include Asp-325 and His-328.

This sequence belongs to the 'GDSL' lipolytic enzyme family.

The protein localises to the secreted. The protein is GDSL esterase/lipase At4g18970 of Arabidopsis thaliana (Mouse-ear cress).